The following is a 61-amino-acid chain: Large ribosomal subunit protein uL29 (61 aa).

This sequence belongs to the universal ribosomal protein uL29 family.

The sequence is that of Large ribosomal subunit protein uL29 from Campylobacter curvus (strain 525.92).